Consider the following 271-residue polypeptide: Acetyl-coenzyme A carboxylase carboxyl transferase subunit alpha (271 aa).

Positions 1–247 (MSRELIRTAD…KKTILEALGE (247 aa)) constitute a CoA carboxyltransferase C-terminal domain.

The protein belongs to the AccA family. In terms of assembly, acetyl-CoA carboxylase is a heterohexamer composed of biotin carboxyl carrier protein (AccB), biotin carboxylase (AccC) and two subunits each of ACCase subunit alpha (AccA) and ACCase subunit beta (AccD).

Its subcellular location is the cytoplasm. It carries out the reaction N(6)-carboxybiotinyl-L-lysyl-[protein] + acetyl-CoA = N(6)-biotinyl-L-lysyl-[protein] + malonyl-CoA. Its pathway is lipid metabolism; malonyl-CoA biosynthesis; malonyl-CoA from acetyl-CoA: step 1/1. In terms of biological role, component of the acetyl coenzyme A carboxylase (ACC) complex. First, biotin carboxylase catalyzes the carboxylation of biotin on its carrier protein (BCCP) and then the CO(2) group is transferred by the carboxyltransferase to acetyl-CoA to form malonyl-CoA. The protein is Acetyl-coenzyme A carboxylase carboxyl transferase subunit alpha of Clostridium perfringens (strain 13 / Type A).